The following is a 155-amino-acid chain: Microsomal glutathione S-transferase 1 (155 aa).

At 3 to 9 (NLSQLME) the chain is on the lumenal side. Residues 10–33 (NEVFMAFASYTTIVLSKMNFMSTA) form a helical membrane-spanning segment. The Cytoplasmic portion of the chain corresponds to 34–62 (TAFYRLTKKVFANPEDCAGFGKGENAKKY). Position 38 (Arg-38) interacts with glutathione. Residues Lys-42, Lys-55, and Lys-60 each carry the N6-acetyllysine modification. The chain crosses the membrane as a helical span at residues 63–96 (LRTDDRVERVRRAHLNDLENIVPFLGIGLLYSLS). Residues Arg-73, Arg-74, His-76, and Glu-81 each coordinate glutathione. At 97 to 99 (GPD) the chain is on the lumenal side. A helical membrane pass occupies residues 100–123 (LSTAILHFRLFVRARIYHTIAYLT). Tyr-121 lines the glutathione pocket. The Cytoplasmic portion of the chain corresponds to 124–128 (PLPQP). A helical membrane pass occupies residues 129–148 (NRALAFFIGYGVTLSMAYRL). At 149-155 (LKSKLYL) the chain is on the lumenal side.

It belongs to the MAPEG family. As to quaternary structure, homotrimer; The trimer binds only one molecule of glutathione.

The protein localises to the endoplasmic reticulum membrane. It is found in the mitochondrion outer membrane. It carries out the reaction RX + glutathione = an S-substituted glutathione + a halide anion + H(+). In terms of biological role, conjugation of reduced glutathione to a wide number of exogenous and endogenous hydrophobic electrophiles. The chain is Microsomal glutathione S-transferase 1 (MGST1) from Bos taurus (Bovine).